The sequence spans 131 residues: MRHGNGLRKLNRTSSHRLAMFRNMAVSLITHEAIKTTLPKAKELRRVIEPLITLGKEPTLANKRLAFARLRDRDAVVKLFAEIGPRFANRNGGYTRVLKMGFRQGDNAPMAYMELVDRPEVDASEADGAAE.

It belongs to the bacterial ribosomal protein bL17 family. In terms of assembly, part of the 50S ribosomal subunit. Contacts protein L32.

The polypeptide is Large ribosomal subunit protein bL17 (Bordetella avium (strain 197N)).